A 349-amino-acid polypeptide reads, in one-letter code: ATP phosphoribosyltransferase regulatory subunit (349 aa).

Residues 327–349 (GRGRGVRPRRASARGGRARARPR) are disordered. Positions 330–349 (RGVRPRRASARGGRARARPR) are enriched in basic residues.

Belongs to the class-II aminoacyl-tRNA synthetase family. HisZ subfamily. Heteromultimer composed of HisG and HisZ subunits.

The protein resides in the cytoplasm. It participates in amino-acid biosynthesis; L-histidine biosynthesis; L-histidine from 5-phospho-alpha-D-ribose 1-diphosphate: step 1/9. Required for the first step of histidine biosynthesis. May allow the feedback regulation of ATP phosphoribosyltransferase activity by histidine. The chain is ATP phosphoribosyltransferase regulatory subunit from Anaeromyxobacter sp. (strain K).